Here is a 724-residue protein sequence, read N- to C-terminus: Catalase-peroxidase (724 aa).

The tryptophyl-tyrosyl-methioninium (Trp-Tyr) (with M-251) cross-link spans 96–225 (WHAAGTYRVA…LAAVMMGLIY (130 aa)). H97 serves as the catalytic Proton acceptor. Residues 225-251 (YVNPEGVDGNPDPLRTAEDVRITFERM) constitute a cross-link (tryptophyl-tyrosyl-methioninium (Tyr-Met) (with W-96)). Heme b is bound at residue H266.

The protein belongs to the peroxidase family. Peroxidase/catalase subfamily. Homodimer or homotetramer. The cofactor is heme b. Formation of the three residue Trp-Tyr-Met cross-link is important for the catalase, but not the peroxidase activity of the enzyme.

It catalyses the reaction H2O2 + AH2 = A + 2 H2O. It carries out the reaction 2 H2O2 = O2 + 2 H2O. Bifunctional enzyme with both catalase and broad-spectrum peroxidase activity. The protein is Catalase-peroxidase of Halorhodospira halophila (strain DSM 244 / SL1) (Ectothiorhodospira halophila (strain DSM 244 / SL1)).